Here is a 302-residue protein sequence, read N- to C-terminus: Spermidine synthase (302 aa).

M1 carries the post-translational modification N-acetylmethionine. The 236-residue stretch at 18–253 folds into the PABS domain; that stretch reads EGWFRETCSL…GQIGFMLCSK (236 aa). An S-adenosyl 3-(methylsulfanyl)propylamine-binding site is contributed by Q49. Y79 serves as a coordination point for putrescine. S-adenosyl 3-(methylsulfanyl)propylamine contacts are provided by residues Q80, D104, E124, 155-156, and D173; that span reads DG. Catalysis depends on D173, which acts as the Proton acceptor. Putrescine contacts are provided by residues 173–176 and Y241; that span reads DSSD.

Belongs to the spermidine/spermine synthase family. Homodimer or homotetramer.

The catalysed reaction is S-adenosyl 3-(methylsulfanyl)propylamine + putrescine = S-methyl-5'-thioadenosine + spermidine + H(+). The protein operates within amine and polyamine biosynthesis; spermidine biosynthesis; spermidine from putrescine: step 1/1. The activity is thought to be regulated mainly by the availability of decarboxylated S-adenosylmethionine. Its function is as follows. Catalyzes the production of spermidine from putrescine and decarboxylated S-adenosylmethionine (dcSAM). Has a strong preference for putrescine as substrate, and has very low activity towards 1,3-diaminopropane. Has extremely low activity towards spermidine. This is Spermidine synthase (Srm) from Mus musculus (Mouse).